The following is a 479-amino-acid chain: Glutamate--tRNA ligase (479 aa).

The 'HIGH' region signature appears at 11–21 (PSPTGYLHIGG). Zn(2+) contacts are provided by cysteine 108, cysteine 110, cysteine 135, and glutamate 137. A 'KMSKS' region motif is present at residues 250 to 254 (KLSKR). Lysine 253 lines the ATP pocket.

It belongs to the class-I aminoacyl-tRNA synthetase family. Glutamate--tRNA ligase type 1 subfamily. As to quaternary structure, monomer. Zn(2+) is required as a cofactor.

The protein resides in the cytoplasm. The enzyme catalyses tRNA(Glu) + L-glutamate + ATP = L-glutamyl-tRNA(Glu) + AMP + diphosphate. In terms of biological role, catalyzes the attachment of glutamate to tRNA(Glu) in a two-step reaction: glutamate is first activated by ATP to form Glu-AMP and then transferred to the acceptor end of tRNA(Glu). In Myxococcus xanthus (strain DK1622), this protein is Glutamate--tRNA ligase.